Reading from the N-terminus, the 460-residue chain is UDP-N-acetylmuramoylalanine--D-glutamate ligase (460 aa).

Position 115 to 121 (115 to 121 (GTNGKTT)) interacts with ATP.

Belongs to the MurCDEF family.

The protein localises to the cytoplasm. The catalysed reaction is UDP-N-acetyl-alpha-D-muramoyl-L-alanine + D-glutamate + ATP = UDP-N-acetyl-alpha-D-muramoyl-L-alanyl-D-glutamate + ADP + phosphate + H(+). The protein operates within cell wall biogenesis; peptidoglycan biosynthesis. In terms of biological role, cell wall formation. Catalyzes the addition of glutamate to the nucleotide precursor UDP-N-acetylmuramoyl-L-alanine (UMA). This chain is UDP-N-acetylmuramoylalanine--D-glutamate ligase, found in Salinibacter ruber (strain DSM 13855 / M31).